The sequence spans 396 residues: Glutamyl-tRNA reductase (396 aa).

Substrate-binding positions include 45-48, serine 101, 106-108, and glutamine 112; these read TCNR and EDQ. Cysteine 46 acts as the Nucleophile in catalysis. Residue 177-182 coordinates NADP(+); sequence GFGDVG.

This sequence belongs to the glutamyl-tRNA reductase family. In terms of assembly, homodimer.

The catalysed reaction is (S)-4-amino-5-oxopentanoate + tRNA(Glu) + NADP(+) = L-glutamyl-tRNA(Glu) + NADPH + H(+). It functions in the pathway porphyrin-containing compound metabolism; protoporphyrin-IX biosynthesis; 5-aminolevulinate from L-glutamyl-tRNA(Glu): step 1/2. Its function is as follows. Catalyzes the NADPH-dependent reduction of glutamyl-tRNA(Glu) to glutamate 1-semialdehyde (GSA). This chain is Glutamyl-tRNA reductase, found in Clostridium acetobutylicum (strain ATCC 824 / DSM 792 / JCM 1419 / IAM 19013 / LMG 5710 / NBRC 13948 / NRRL B-527 / VKM B-1787 / 2291 / W).